A 177-amino-acid polypeptide reads, in one-letter code: Bifunctional protein PyrR (177 aa).

The PRPP-binding motif lies at 99 to 111; the sequence is VVLVDDVIYKGRT.

It belongs to the purine/pyrimidine phosphoribosyltransferase family. PyrR subfamily.

The catalysed reaction is UMP + diphosphate = 5-phospho-alpha-D-ribose 1-diphosphate + uracil. Regulates the transcription of the pyrimidine nucleotide (pyr) operon in response to exogenous pyrimidines. Its function is as follows. Also displays a weak uracil phosphoribosyltransferase activity which is not physiologically significant. This Gloeothece citriformis (strain PCC 7424) (Cyanothece sp. (strain PCC 7424)) protein is Bifunctional protein PyrR.